The chain runs to 385 residues: Isocitrate dehydrogenase [NAD] subunit beta, mitochondrial (385 aa).

The transit peptide at 1 to 34 (MAALSGVRWLTRALVSAGNPGAWRGLSTSAAAHA) directs the protein to the mitochondrion. At K199 the chain carries N6-acetyllysine.

The protein belongs to the isocitrate and isopropylmalate dehydrogenases family. As to quaternary structure, heterooligomer of subunits alpha (IDH3A), beta (IDH3B), and gamma (IDH3G) in the apparent ratio of 2:1:1. The heterodimer containing one IDH3A and one IDH3B subunit and the heterodimer containing one IDH3A and one IDH3G subunit assemble into a heterotetramer (which contains two subunits of IDH3A, one of IDH3B and one of IDH3G) and further into the heterooctamer.

The protein localises to the mitochondrion. Its activity is regulated as follows. The heterotetramer and the heterodimer composed of IDH3A and IDH3G subunits can be allosterically activated by citrate (CIT) or/and ADP, and the two activators can act independently or synergistically. The heterodimer composed of IDH3A and IDH3B subunits cannot be allosterically regulated and the allosteric regulation of the heterotetramer is through the IDH3G subunit and not the IDH3B subunit. The IDH3G subunit contains the allosteric site which consists of a CIT-binding site and an ADP-binding site, and the binding of CIT and ADP causes conformational changes at the allosteric site which are transmitted to the active site in the catalytic subunit (IDH3A) through a cascade of conformational changes at the heterodimer interface, leading to stabilization of the isocitrate-binding at the active site and thus activation of the enzyme. ATP can activate the heterotetramer and the heterodimer composed of IDH3A and IDH3G subunits at low concentrations but inhibits their activities at high concentrations, whereas ATP exhibits only inhibitory effect on the heterodimer composed of IDH3A and IDH3B subunits. Functionally, plays a structural role to facilitate the assembly and ensure the full activity of the enzyme catalyzing the decarboxylation of isocitrate (ICT) into alpha-ketoglutarate. The heterodimer composed of the alpha (IDH3A) and beta (IDH3B) subunits and the heterodimer composed of the alpha (IDH3A) and gamma (IDH3G) subunits, have considerable basal activity but the full activity of the heterotetramer (containing two subunits of IDH3A, one of IDH3B and one of IDH3G) requires the assembly and cooperative function of both heterodimers. This chain is Isocitrate dehydrogenase [NAD] subunit beta, mitochondrial (IDH3B), found in Homo sapiens (Human).